Here is a 407-residue protein sequence, read N- to C-terminus: uncharacterized protein (407 aa).

The Lumenal portion of the chain corresponds to 1–290 (MPLNIIGTAL…SNSLRRVISN (290 aa)). NADP(+)-binding residues include aspartate 114, lysine 236, and serine 281. Lysine 236 serves as the catalytic Lowers pKa of active site Tyr. Residues 291-311 (GSVVLLIILYCILLYPILWLF) form a helical membrane-spanning segment. At 312-407 (TKSGRRGDQS…KSQNKSRKDD (96 aa)) the chain is on the cytoplasmic side. Residues 361–390 (ELQKKLFDNTERDILQLEKKVAAKRNANKT) adopt a coiled-coil conformation. Positions 383–407 (AKRNANKTGNQNSKKKSQNKSRKDD) are disordered. Basic residues predominate over residues 395-407 (SKKKSQNKSRKDD).

This sequence belongs to the short-chain dehydrogenases/reductases (SDR) family.

It is found in the endoplasmic reticulum membrane. In terms of biological role, may be involved in lipid metabolism. This is an uncharacterized protein from Saccharomyces cerevisiae (strain ATCC 204508 / S288c) (Baker's yeast).